The chain runs to 20 residues: Cicerin (20 aa).

The interval 1–20 (ARCENFADSYRQPPISSSQT) is disordered.

Its function is as follows. Has antifungal activity against B.cinerea, F.oxysporum and M.arachidicola. Inhibits cell-free translation in rabbit reticulocyte lysate system. The polypeptide is Cicerin (Cicer arietinum (Chickpea)).